The primary structure comprises 896 residues: Alanine--tRNA ligase (896 aa).

The span at 439–456 shows a compositional bias: basic and acidic residues; that stretch reads QRAKDDAKAKKGQHRDAS. The interval 439–459 is disordered; it reads QRAKDDAKAKKGQHRDASAYR. His-579, His-583, Cys-681, and His-685 together coordinate Zn(2+).

The protein belongs to the class-II aminoacyl-tRNA synthetase family. Zn(2+) serves as cofactor.

It localises to the cytoplasm. It carries out the reaction tRNA(Ala) + L-alanine + ATP = L-alanyl-tRNA(Ala) + AMP + diphosphate. Functionally, catalyzes the attachment of alanine to tRNA(Ala) in a two-step reaction: alanine is first activated by ATP to form Ala-AMP and then transferred to the acceptor end of tRNA(Ala). Also edits incorrectly charged Ser-tRNA(Ala) and Gly-tRNA(Ala) via its editing domain. The protein is Alanine--tRNA ligase of Nocardioides sp. (strain ATCC BAA-499 / JS614).